Reading from the N-terminus, the 148-residue chain is MKAAGILTLIGCLVTGAESKIYTRCKLAKIFSRAGLDNYWGFSLGNWICMAYYESGYNTTAQTVLDDGSIDYGIFQINSFAWCRRGKLKENNHCHVACSALVTDDLTDAIICAKKIVKETQGMNYWQGWKKHCEGRDLSDWKKDCEVS.

The first 19 residues, 1–19, serve as a signal peptide directing secretion; that stretch reads MKAAGILTLIGCLVTGAES. The C-type lysozyme domain maps to 20–148; it reads KIYTRCKLAK…SDWKKDCEVS (129 aa). Intrachain disulfides connect Cys-25–Cys-145, Cys-49–Cys-133, Cys-83–Cys-98, and Cys-94–Cys-112. Glu-54 is an active-site residue. An N-linked (GlcNAc...) asparagine glycan is attached at Asn-58. The active site involves Asp-71.

Belongs to the glycosyl hydrolase 22 family. In terms of assembly, monomer. Expressed in testis, epididymis and placenta.

It is found in the secreted. The catalysed reaction is Hydrolysis of (1-&gt;4)-beta-linkages between N-acetylmuramic acid and N-acetyl-D-glucosamine residues in a peptidoglycan and between N-acetyl-D-glucosamine residues in chitodextrins.. In Homo sapiens (Human), this protein is Lysozyme-like protein 2 (LYZL2).